The sequence spans 410 residues: 3-phosphoshikimate 1-carboxyvinyltransferase (410 aa).

The 3-phosphoshikimate site is built by lysine 20, serine 21, and arginine 25. A phosphoenolpyruvate-binding site is contributed by lysine 20. Phosphoenolpyruvate contacts are provided by glycine 87 and arginine 115. Serine 157, serine 158, glutamine 159, serine 183, aspartate 293, and lysine 320 together coordinate 3-phosphoshikimate. Glutamine 159 contacts phosphoenolpyruvate. The active-site Proton acceptor is the aspartate 293. The phosphoenolpyruvate site is built by arginine 324, arginine 365, and lysine 391.

Belongs to the EPSP synthase family. Monomer.

It localises to the cytoplasm. It carries out the reaction 3-phosphoshikimate + phosphoenolpyruvate = 5-O-(1-carboxyvinyl)-3-phosphoshikimate + phosphate. It functions in the pathway metabolic intermediate biosynthesis; chorismate biosynthesis. In terms of biological role, catalyzes the transfer of the enolpyruvyl moiety of phosphoenolpyruvate (PEP) to the 5-hydroxyl of shikimate-3-phosphate (S3P) to produce enolpyruvyl shikimate-3-phosphate and inorganic phosphate. The chain is 3-phosphoshikimate 1-carboxyvinyltransferase from Thermoplasma volcanium (strain ATCC 51530 / DSM 4299 / JCM 9571 / NBRC 15438 / GSS1).